The primary structure comprises 216 residues: HTH-type transcriptional regulator EthR (216 aa).

Positions 1-10 (MTTSAASQAS) are enriched in polar residues. Residues 1 to 24 (MTTSAASQASLPRGRRTARPSGDD) are disordered. Residues 23-83 (DDRELAILAT…TLLDRVVNQA (61 aa)) enclose the HTH tetR-type domain. A DNA-binding region (H-T-H motif) is located at residues 46-65 (SVDDLAKGAGISRPTFYFYF).

In terms of assembly, homodimer.

In terms of biological role, involved in the repression of the monooxygenase EthA which is responsible of the formation of the active metabolite of ethionamide (ETH). The chain is HTH-type transcriptional regulator EthR (ethR) from Mycobacterium bovis (strain ATCC BAA-935 / AF2122/97).